Consider the following 384-residue polypeptide: Methyl-CpG-binding domain-containing protein 10 (384 aa).

The MBD domain maps to 4–74 (TDELVSIELP…SEFEWTTGET (71 aa)). The tract at residues 65–384 (SEFEWTTGET…QQGAAASVSC (320 aa)) is disordered. Residues 80–91 (RISQKVKATTPT) are compositionally biased toward polar residues. A coiled-coil region spans residues 100–224 (KRRSSLTKKD…MEVDTSELEK (125 aa)). Basic and acidic residues-rich tracts occupy residues 106-227 (TKKD…KKAG), 234-250 (EPSK…KEAQ), and 257-269 (DVEK…KTEN). Residues 270–284 (KGSVTTEANGEQNVT) show a composition bias toward polar residues. Residues 295–365 (EADKGKESKE…NDMKAEDTNR (71 aa)) show a composition bias toward basic and acidic residues. The stretch at 310–356 (TEAEANKENDTQESDEKKTEAAANKENETQESDVKKTEAAVAEEKSN) forms a coiled coil. At S323 the chain carries Phosphoserine. Over residues 369–384 (ANQVQQQQGAAASVSC) the composition is skewed to low complexity.

In terms of tissue distribution, expressed in leaves, buds, flowers, stems and siliques.

The protein localises to the nucleus. Functionally, probable transcriptional regulator. Required for nucleolar dominance that consist in the silencing of rRNA genes inherited from one progenitor in genetic hybrids. The polypeptide is Methyl-CpG-binding domain-containing protein 10 (MBD10) (Arabidopsis thaliana (Mouse-ear cress)).